The primary structure comprises 204 residues: Elongation factor Ts (204 aa).

The interval 80 to 83 (TDFV) is involved in Mg(2+) ion dislocation from EF-Tu.

The protein belongs to the EF-Ts family.

The protein resides in the cytoplasm. Functionally, associates with the EF-Tu.GDP complex and induces the exchange of GDP to GTP. It remains bound to the aminoacyl-tRNA.EF-Tu.GTP complex up to the GTP hydrolysis stage on the ribosome. The sequence is that of Elongation factor Ts from Caldicellulosiruptor bescii (strain ATCC BAA-1888 / DSM 6725 / KCTC 15123 / Z-1320) (Anaerocellum thermophilum).